Reading from the N-terminus, the 854-residue chain is Espin (854 aa).

ANK repeat units lie at residues 1-31, 35-64, 69-99, 103-133, 137-167, 171-201, 205-235, 239-268, and 271-300; these read MALEQALQAARQGELDVLRSLHAAGLLGPSL, LDALPVHHAARAGKLHCLRFLVEEAALPAA, NGATPAHDASATGHLACLQWLLSQGGCRVQD, SGATVLHLAARFGHPEVVNWLLHHGGGDPTA, MGALPIHYAAAKGDFPSLRLLVEHYPEGVNA, NGATPLYLACQEGHLEVTQYLVQECGADPHA, DGMTPLHAAAQMGHSPVIVWLVSCTDVSLSE, DGATAMHFAASRGHTKVLSWLLLHGGEISA, and WGGTPLHDAAENGELECCQILVVNGAELDV. 2 positions are modified to phosphoserine: S338 and S342. The segment covering 338 to 349 has biased composition (basic and acidic residues); sequence SRDPSAELEAKQ. 5 disordered regions span residues 338–400, 415–474, 487–713, 765–788, and 800–832; these read SRDP…CGLS, NPEL…MQTK, KELS…AGFQ, KMQEEEEQRRKEEEEEARLASMPA, and EEREQKRKEEERQKQEELRREKEQSEKLRTLGY. A compositionally biased stretch (polar residues) spans 352–377; that stretch reads SGMSSPNTTVSVQPLNFDLSSPTSTL. Residues 378–389 show a composition bias toward low complexity; it reads SNYDSCSSSHSS. The span at 428–463 shows a compositional bias: pro residues; sequence PTPPPPPPSFPPPPPPPGTQLPPPPPGYPAPKPPVG. Residues 487–505 show a composition bias toward basic and acidic residues; the sequence is KELSSCDGHDGLRRQDSSR. S515 is subject to Phosphoserine. Positions 595-620 are enriched in pro residues; the sequence is LPPPPPPPPPPLPEAASSPPPAPPLP. Over residues 633-642 the composition is skewed to low complexity; the sequence is SSSSTGSTKS. 2 stretches are compositionally biased toward polar residues: residues 643-652 and 667-678; these read FNMMSPTGDN and PTPQSKGLTTVF. S647 is modified (phosphoserine). A WH2 domain is found at 651-668; it reads DNSELLAEIKAGKSLKPT. Phosphoserine is present on residues S690 and S696. A compositionally biased stretch (low complexity) spans 692–703; it reads LPSVSPALSPVR. Positions 756 to 830 form a coiled coil; the sequence is QVMVRKMQLK…KEQSEKLRTL (75 aa).

In terms of assembly, monomer. Binds F-actin in a Ca(2+)-resistant fashion. Interacts (via N-terminus) with BAIAP2 (via SH3-domain). Interacts with PFN2. Interacts with MYO3A (via C-terminus). Interacts with MYO3B (via C-terminus).

It localises to the cytoplasm. Its subcellular location is the cytoskeleton. The protein localises to the cell projection. The protein resides in the stereocilium. It is found in the microvillus. Its function is as follows. Multifunctional actin-bundling protein. Plays a major role in regulating the organization, dimension, dynamics and signaling capacities of the actin filament-rich microvilli in the mechanosensory and chemosensory cells. Required for the assembly and stabilization of the stereociliary parallel actin bundles. Plays a crucial role in the formation and maintenance of inner ear hair cell stereocilia. Involved in the elongation of actin in stereocilia. In extrastriolar hair cells, required for targeting MYO3B to stereocilia tips, and for regulation of stereocilia diameter and staircase formation. This chain is Espin (ESPN), found in Homo sapiens (Human).